Here is a 159-residue protein sequence, read N- to C-terminus: MQLVIVAVGHKMPGWIETGFNEYAKRMPPELRIELREVKPETRSSSNNAATVMQREAARIDAVLGSLSRQCRIVALDERGRDFTTVQLAGQLTDWQREGGDVAFLIGGADGLDPALKARAQTLLRLSSLTLPHGMVRVLLAEQLYRAWSVTQNHPYHRA.

Residues Leu-76, Gly-107, and 126–131 (LSSLTL) each bind S-adenosyl-L-methionine.

The protein belongs to the RNA methyltransferase RlmH family. As to quaternary structure, homodimer.

The protein resides in the cytoplasm. The enzyme catalyses pseudouridine(1915) in 23S rRNA + S-adenosyl-L-methionine = N(3)-methylpseudouridine(1915) in 23S rRNA + S-adenosyl-L-homocysteine + H(+). Specifically methylates the pseudouridine at position 1915 (m3Psi1915) in 23S rRNA. The polypeptide is Ribosomal RNA large subunit methyltransferase H (Cupriavidus pinatubonensis (strain JMP 134 / LMG 1197) (Cupriavidus necator (strain JMP 134))).